We begin with the raw amino-acid sequence, 94 residues long: Progonadoliberin-1 (94 aa).

Positions 1–22 are cleaved as a signal peptide; sequence MAAKILALWLLLAGTVFPQGCC. Pyrrolidone carboxylic acid is present on Gln-23. Gly-32 bears the Glycine amide mark.

The protein belongs to the GnRH family. In terms of tissue distribution, synthesized in preoptic neurons and is transported to the pituitary in the preoptic-hypophyseal axons.

Its subcellular location is the secreted. Its function is as follows. Stimulates the secretion of gonadotropins. May be responsible for the regulation of the hypothalamic-pituitary-gonadal axis. This chain is Progonadoliberin-1 (gnrh1), found in Haplochromis burtoni (Burton's mouthbrooder).